The following is an 80-amino-acid chain: Small ribosomal subunit protein bS16 (80 aa).

It belongs to the bacterial ribosomal protein bS16 family.

The chain is Small ribosomal subunit protein bS16 from Nitrosococcus oceani (strain ATCC 19707 / BCRC 17464 / JCM 30415 / NCIMB 11848 / C-107).